The following is a 168-amino-acid chain: MIVLGRIVAPFGVKGWVKVHPFGDDPLSWGEMPQWWLADDADAPESAWQPVTLAGFKEHGAGLVAAFVGHDDRNAAEALQGRFIGAPREALPKPDVDEYYWGDLIGLAVVNQADEALGTVEALMSTGAHDVLQVRDGDDERLIPFVAAYVLDVDLAARTIRVDWQKDW.

Residues 96 to 168 enclose the PRC barrel domain; that stretch reads VDEYYWGDLI…TIRVDWQKDW (73 aa).

It belongs to the RimM family. Binds ribosomal protein uS19.

It is found in the cytoplasm. Its function is as follows. An accessory protein needed during the final step in the assembly of 30S ribosomal subunit, possibly for assembly of the head region. Essential for efficient processing of 16S rRNA. May be needed both before and after RbfA during the maturation of 16S rRNA. It has affinity for free ribosomal 30S subunits but not for 70S ribosomes. The protein is Ribosome maturation factor RimM of Aromatoleum aromaticum (strain DSM 19018 / LMG 30748 / EbN1) (Azoarcus sp. (strain EbN1)).